The primary structure comprises 460 residues: MGKEKGHINVVVIGHVDSGKSTTTGHLIYKCGGIDKRTIEKFEKEATELGKGSFKYAWVLDKLKAERERGITIDIALWKFETPKYNVTVIDAPGHRDFIKNMITGTSQADCAVLIIGGGTGEFEAGISKDGQTREHALLAYTLGVKQLIVAVNKMDTTGWSQARFEEIVKETSNFIKKVGFNPKTVPFVPVSGFQGDNMIEPTTNMPWYQGWQKETKAGVVKGKTLLEAIDSIEPPARPTDKPLRLPLQDVYKIGGIGTVPVGRVETGVIKPGMIVTFAPAGVTTEVKSVEMHHESLDAGLPGDNVGFNVKNVSVKDIRRGNVCGDSKNDPPMGCASFTAQVIILNHPGQISAGYSPVLDCHTAHIACKFAELIEKIDRRSGKKIEESPKFVKSGDACIAKMVPSKPMCVEAFTDYAPLGRFAVRDMRQTVAVGVIKAVEKVAPGAAKVTKAAVKAGAKK.

Glycine 2 carries the post-translational modification N,N,N-trimethylglycine. Lysine 3 carries the N6,N6-dimethyllysine; alternate modification. Lysine 3 carries the N6-methyllysine; alternate modification. The tr-type G domain maps to 5-240 (KGHINVVVIG…DSIEPPARPT (236 aa)). Positions 14–21 (GHVDSGKS) are G1. 14 to 21 (GHVDSGKS) serves as a coordination point for GTP. Residue lysine 30 is modified to N6-methyllysine. The segment at 70-74 (GITID) is G2. Lysine 79 carries the post-translational modification N6,N6,N6-trimethyllysine. Positions 91-94 (DAPG) are G3. GTP-binding positions include 91–95 (DAPGH) and 153–156 (NKMD). The tract at residues 153–156 (NKMD) is G4. Residues 192–194 (SGF) are G5. Lysine 316 is subject to N6,N6-dimethyllysine; alternate. Position 316 is an N6-methyllysine; alternate (lysine 316). Position 390 is an N6-methyllysine (lysine 390).

Belongs to the TRAFAC class translation factor GTPase superfamily. Classic translation factor GTPase family. EF-Tu/EF-1A subfamily.

Its subcellular location is the cytoplasm. In terms of biological role, this protein promotes the GTP-dependent binding of aminoacyl-tRNA to the A-site of ribosomes during protein biosynthesis. This Schizosaccharomyces pombe (strain 972 / ATCC 24843) (Fission yeast) protein is Elongation factor 1-alpha-A (tef101).